A 60-amino-acid chain; its full sequence is uncharacterized protein (60 aa).

This is an uncharacterized protein from Treponema pallidum (strain Nichols).